The following is a 339-amino-acid chain: Tetracenomycin polyketide synthesis 8-O-methyl transferase TcmO (339 aa).

S-adenosyl-L-methionine-binding positions include Asp200 and 226 to 228; that span reads GDF. The active-site Proton acceptor is His246.

This sequence belongs to the class I-like SAM-binding methyltransferase superfamily. Cation-independent O-methyltransferase family.

It functions in the pathway antibiotic biosynthesis; tetracenomycin C biosynthesis. The sequence is that of Tetracenomycin polyketide synthesis 8-O-methyl transferase TcmO (tcmO) from Streptomyces glaucescens.